The sequence spans 715 residues: Fatty acid oxidation complex subunit alpha (715 aa).

The tract at residues 1 to 190 (MTTTSAFMLN…KAGLVDDVVP (190 aa)) is enoyl-CoA hydratase. The tract at residues 306 to 715 (GPLNSVGILG…WTNGETDQGN (410 aa)) is 3-hydroxyacyl-CoA dehydrogenase.

It in the N-terminal section; belongs to the enoyl-CoA hydratase/isomerase family. In the central section; belongs to the 3-hydroxyacyl-CoA dehydrogenase family. In terms of assembly, heterotetramer of two alpha chains (FadJ) and two beta chains (FadI).

Its subcellular location is the cytoplasm. It carries out the reaction a (3S)-3-hydroxyacyl-CoA = a (2E)-enoyl-CoA + H2O. It catalyses the reaction a 4-saturated-(3S)-3-hydroxyacyl-CoA = a (3E)-enoyl-CoA + H2O. The catalysed reaction is a (3S)-3-hydroxyacyl-CoA + NAD(+) = a 3-oxoacyl-CoA + NADH + H(+). The enzyme catalyses (3S)-3-hydroxybutanoyl-CoA = (3R)-3-hydroxybutanoyl-CoA. The protein operates within lipid metabolism; fatty acid beta-oxidation. Its function is as follows. Catalyzes the formation of a hydroxyacyl-CoA by addition of water on enoyl-CoA. Also exhibits 3-hydroxyacyl-CoA epimerase and 3-hydroxyacyl-CoA dehydrogenase activities. In Salmonella paratyphi B (strain ATCC BAA-1250 / SPB7), this protein is Fatty acid oxidation complex subunit alpha.